A 122-amino-acid chain; its full sequence is Large ribosomal subunit protein uL14 (122 aa).

Belongs to the universal ribosomal protein uL14 family. In terms of assembly, part of the 50S ribosomal subunit. Forms a cluster with proteins L3 and L19. In the 70S ribosome, L14 and L19 interact and together make contacts with the 16S rRNA in bridges B5 and B8.

Binds to 23S rRNA. Forms part of two intersubunit bridges in the 70S ribosome. The chain is Large ribosomal subunit protein uL14 from Helicobacter pylori (strain J99 / ATCC 700824) (Campylobacter pylori J99).